A 291-amino-acid chain; its full sequence is Elongation factor Ts (291 aa).

Positions 84-87 are involved in Mg(2+) ion dislocation from EF-Tu; it reads TDFV.

The protein belongs to the EF-Ts family.

It localises to the cytoplasm. In terms of biological role, associates with the EF-Tu.GDP complex and induces the exchange of GDP to GTP. It remains bound to the aminoacyl-tRNA.EF-Tu.GTP complex up to the GTP hydrolysis stage on the ribosome. The chain is Elongation factor Ts from Bifidobacterium adolescentis (strain ATCC 15703 / DSM 20083 / NCTC 11814 / E194a).